The sequence spans 271 residues: Tryptophan synthase alpha chain (271 aa).

Residues E49 and D60 each act as proton acceptor in the active site.

Belongs to the TrpA family. In terms of assembly, tetramer of two alpha and two beta chains.

The catalysed reaction is (1S,2R)-1-C-(indol-3-yl)glycerol 3-phosphate + L-serine = D-glyceraldehyde 3-phosphate + L-tryptophan + H2O. It participates in amino-acid biosynthesis; L-tryptophan biosynthesis; L-tryptophan from chorismate: step 5/5. The alpha subunit is responsible for the aldol cleavage of indoleglycerol phosphate to indole and glyceraldehyde 3-phosphate. This chain is Tryptophan synthase alpha chain, found in Burkholderia thailandensis (strain ATCC 700388 / DSM 13276 / CCUG 48851 / CIP 106301 / E264).